A 224-amino-acid chain; its full sequence is Transmembrane emp24 domain-containing protein 7 (224 aa).

An N-terminal signal peptide occupies residues 1 to 34; that stretch reads MPRPGSAQRWAAVAGRWGCRLLALLLLVPGPGGA. The Lumenal segment spans residues 35 to 187; the sequence is SEITFELPDN…RAEDLNTRVA (153 aa). The GOLD domain maps to 46–128; it reads KQCFYEDIAQ…HKTVYFDFQV (83 aa). N-linked (GlcNAc...) asparagine glycosylation occurs at N103. A helical membrane pass occupies residues 188–208; that stretch reads YWSVGEALILLVVSIGQVFLL. Over 209 to 224 the chain is Cytoplasmic; the sequence is KSFFSDKRTTTTRVGS. Residues 211 to 212 carry the COPII vesicle coat-binding motif; sequence FF. Residues 211-224 carry the COPI vesicle coat-binding motif; sequence FFSDKRTTTTRVGS.

It belongs to the EMP24/GP25L family. In terms of assembly, predominantly monomeric and to lesser extent homodimeric in endoplasmic reticulum, endoplasmic reticulum-Golgi intermediate compartment and cis-Golgi network. Oligomerizes with other members of the EMP24/GP25L family such as TMED2, TMED9 and TMED10. Interacts (via C-terminus) with COPG1; the interaction involves dimeric TMED7. Post-translationally, N-linked glycosylated in complex form containing terminal sialic acid.

The protein resides in the endoplasmic reticulum membrane. The protein localises to the golgi apparatus. It is found in the cis-Golgi network membrane. Its subcellular location is the endoplasmic reticulum-Golgi intermediate compartment membrane. It localises to the cytoplasmic vesicle. The protein resides in the COPI-coated vesicle membrane. The protein localises to the COPII-coated vesicle membrane. Its function is as follows. Potential role in vesicular protein trafficking, mainly in the early secretory pathway. Appears to play a role in the biosynthesis of secreted cargo including processing and post-translational modifications. The chain is Transmembrane emp24 domain-containing protein 7 (TMED7) from Homo sapiens (Human).